A 132-amino-acid polypeptide reads, in one-letter code: Small ribosomal subunit protein uS8 (132 aa).

It belongs to the universal ribosomal protein uS8 family. In terms of assembly, part of the 30S ribosomal subunit. Contacts proteins S5 and S12.

In terms of biological role, one of the primary rRNA binding proteins, it binds directly to 16S rRNA central domain where it helps coordinate assembly of the platform of the 30S subunit. The chain is Small ribosomal subunit protein uS8 from Anoxybacillus flavithermus (strain DSM 21510 / WK1).